The sequence spans 424 residues: Tubby protein homolog 1 (424 aa).

Residues 19–47 (MLEDKQKQKRHQSAGSVRTTTTTSSMSMN) form a disordered region. Positions 37 to 47 (TTTTTSSMSMN) are enriched in low complexity.

The protein belongs to the TUB family. Interacts with rgb-3.

It localises to the cytoplasm. It is found in the cell projection. Its subcellular location is the axon. The protein localises to the dendrite. The protein resides in the cilium. Has a role in fat regulation independent of daf-16. Implicated in ciliar sensory function which is required for normal sensory behavior such as chemotaxis. Functions in life span control via the insulin/IGF-1 pathway. Thought to be involved in neuronal trafficking. This chain is Tubby protein homolog 1, found in Caenorhabditis briggsae.